The following is a 1091-amino-acid chain: AP-3 complex subunit beta-1 (1091 aa).

Disordered regions lie at residues 1–32 and 267–290; these read MSGNSFAYSEQAGGGEATELGQEATSTVSPSG and EDNEKNFYESDDEQKEKTDQKKKP. The segment covering 267–288 has biased composition (basic and acidic residues); it reads EDNEKNFYESDDEQKEKTDQKK. Residues Ser276 and Ser609 each carry the phosphoserine modification. The segment at 664–807 is disordered; sequence AGKAKKENPA…EKEKKTKEDR (144 aa). Positions 667–678 are enriched in basic and acidic residues; that stretch reads AKKENPARKFYS. Composition is skewed to acidic residues over residues 679–695 and 703–718; these read DSEEEEDSSDSSSDSES and EQDEEGDSSEDSSEDS. Residues 719-736 show a composition bias toward basic and acidic residues; sequence SSEHRSDSESVSEVGDKR. Phosphoserine is present on residues Ser748 and Ser750. Residues 763 to 775 are compositionally biased toward low complexity; that stretch reads SDSSSTDSSSVEE. The span at 776-789 shows a compositional bias: acidic residues; sequence SSSDSESESESESE. Over residues 790–807 the composition is skewed to basic and acidic residues; sequence SESKKVTMEKEKKTKEDR.

The protein belongs to the adaptor complexes large subunit family. Adaptor protein complex 3 (AP-3) is a heterotetramer composed of two large adaptins (delta-type subunit AP3D1 and beta-type subunit AP3B1 or AP3B2), a medium adaptin (mu-type subunit AP3M1 or AP3M2) and a small adaptin (sigma-type subunit APS1 or AP3S2). AP-3 associates with the BLOC-1 complex. Interacts with KIF3A; interaction is direct; interaction is impaired by pyrophosphorylation of AP3B1. In terms of processing, phosphorylated on serine residues. Post-translationally, pyrophosphorylation by 5-diphosphoinositol pentakisphosphate (5-IP7) impairs interaction with KIF3A. Serine pyrophosphorylation is achieved by Mg(2+)-dependent, but enzyme independent transfer of a beta-phosphate from a inositol pyrophosphate to a pre-phosphorylated serine residue.

It localises to the cytoplasmic vesicle. Its subcellular location is the clathrin-coated vesicle membrane. It is found in the golgi apparatus. Subunit of non-clathrin- and clathrin-associated adaptor protein complex 3 (AP-3) that plays a role in protein sorting in the late-Golgi/trans-Golgi network (TGN) and/or endosomes. The AP complexes mediate both the recruitment of clathrin to membranes and the recognition of sorting signals within the cytosolic tails of transmembrane cargo molecules. AP-3 appears to be involved in the sorting of a subset of transmembrane proteins targeted to lysosomes and lysosome-related organelles. In concert with the BLOC-1 complex, AP-3 is required to target cargos into vesicles assembled at cell bodies for delivery into neurites and nerve terminals. The chain is AP-3 complex subunit beta-1 (AP3B1) from Canis lupus familiaris (Dog).